The following is a 264-amino-acid chain: Phosphatidylglycerol--prolipoprotein diacylglyceryl transferase (264 aa).

The next 7 membrane-spanning stretches (helical) occupy residues 14 to 34 (IIFSIGPIALRWYGLMYLIGF), 60 to 80 (LIYTCFWGVILGGRIGDVFFY), 98 to 118 (GGMSFHGGLIGVIVAMIWVSF), 128 to 148 (ADFIAPLIPFGLGMGRIGNFI), 176 to 196 (SQLYEFFLEGVVLFFILNWFI), 203 to 223 (GSVAGLFLIGYGVFRFLVEYV), and 240 to 260 (GQLLSLPMIIGGLAIMIWAYS). An a 1,2-diacyl-sn-glycero-3-phospho-(1'-sn-glycerol)-binding site is contributed by arginine 143.

Belongs to the Lgt family.

The protein localises to the cell inner membrane. The enzyme catalyses L-cysteinyl-[prolipoprotein] + a 1,2-diacyl-sn-glycero-3-phospho-(1'-sn-glycerol) = an S-1,2-diacyl-sn-glyceryl-L-cysteinyl-[prolipoprotein] + sn-glycerol 1-phosphate + H(+). It functions in the pathway protein modification; lipoprotein biosynthesis (diacylglyceryl transfer). Catalyzes the transfer of the diacylglyceryl group from phosphatidylglycerol to the sulfhydryl group of the N-terminal cysteine of a prolipoprotein, the first step in the formation of mature lipoproteins. This Actinobacillus pleuropneumoniae serotype 7 (strain AP76) protein is Phosphatidylglycerol--prolipoprotein diacylglyceryl transferase.